The following is a 339-amino-acid chain: O-methyltransferase 7 (339 aa).

S-adenosyl-L-methionine-binding residues include Gly-186, Asp-209, Ser-232, Phe-233, and Lys-246. The active-site Proton acceptor is the His-250.

This sequence belongs to the class I-like SAM-binding methyltransferase superfamily. Cation-independent O-methyltransferase family. COMT subfamily.

It carries out the reaction (3,5-dichloro-2,4,6-trihydroxyphenyl)hexan-1-one + S-adenosyl-L-methionine = 1-(3,5-dichloro-2,6-dihydroxy-4-methoxyphenyl)hexan-1-one + S-adenosyl-L-homocysteine + H(+). This is O-methyltransferase 7 (omt7) from Dictyostelium discoideum (Social amoeba).